Consider the following 132-residue polypeptide: Agouti-signaling protein (132 aa).

Positions 1 to 22 are cleaved as a signal peptide; sequence MDVTRLLLATLLVFLCFFTADS. N-linked (GlcNAc...) asparagine glycosylation is present at N39. Residues 62 to 85 form a disordered region; sequence ISRKEAEKKRSSKKEASMKTVARP. A compositionally biased stretch (basic and acidic residues) spans 63 to 78; that stretch reads SRKEAEKKRSSKKEAS. 5 disulfide bridges follow: C93/C108, C100/C114, C107/C125, C111/C132, and C116/C123. The Agouti domain occupies 93 to 132; sequence CVATRNSCKPPAPACCDPCASCQCRFFRSACSCRVLSLNC.

The protein resides in the secreted. In terms of biological role, involved in the regulation of melanogenesis. The binding of ASP to MC1R precludes alpha-MSH initiated signaling and thus blocks production of cAMP, leading to a down-regulation of eumelanogenesis (brown/black pigment) and thus increasing synthesis of pheomelanin (yellow/red pigment). In Pongo pygmaeus (Bornean orangutan), this protein is Agouti-signaling protein (ASIP).